The primary structure comprises 35 residues: Augerpeptide hheTx4 (35 aa).

Post-translationally, contains 4 disulfide bonds. As to expression, expressed by the venom duct.

It is found in the secreted. This chain is Augerpeptide hheTx4, found in Hastula hectica (Sea snail).